A 154-amino-acid chain; its full sequence is 6,7-dimethyl-8-ribityllumazine synthase (154 aa).

Residues phenylalanine 22, 56-58 (SFE), and 81-83 (VLI) each bind 5-amino-6-(D-ribitylamino)uracil. 86 to 87 (ET) lines the (2S)-2-hydroxy-3-oxobutyl phosphate pocket. Histidine 89 functions as the Proton donor in the catalytic mechanism. Residue phenylalanine 114 coordinates 5-amino-6-(D-ribitylamino)uracil. Residue arginine 128 participates in (2S)-2-hydroxy-3-oxobutyl phosphate binding.

It belongs to the DMRL synthase family.

The catalysed reaction is (2S)-2-hydroxy-3-oxobutyl phosphate + 5-amino-6-(D-ribitylamino)uracil = 6,7-dimethyl-8-(1-D-ribityl)lumazine + phosphate + 2 H2O + H(+). It participates in cofactor biosynthesis; riboflavin biosynthesis; riboflavin from 2-hydroxy-3-oxobutyl phosphate and 5-amino-6-(D-ribitylamino)uracil: step 1/2. Catalyzes the formation of 6,7-dimethyl-8-ribityllumazine by condensation of 5-amino-6-(D-ribitylamino)uracil with 3,4-dihydroxy-2-butanone 4-phosphate. This is the penultimate step in the biosynthesis of riboflavin. The protein is 6,7-dimethyl-8-ribityllumazine synthase of Chlamydia felis (strain Fe/C-56) (Chlamydophila felis).